The primary structure comprises 767 residues: Two-component response regulator-like PRR73 (767 aa).

The disordered stretch occupies residues 1 to 64 (MGSACEAGTD…EPQQTDEQKE (64 aa)). A Response regulatory domain is found at 82–200 (RVLLVENDDS…ELKNLWQHVW (119 aa)). Over residues 205–214 (SSSGSGSESG) the composition is skewed to low complexity. 5 disordered regions span residues 205–272 (SSSG…QSSW), 312–388 (RWLP…NEPT), 476–546 (ASNQ…RGKV), 646–701 (ANYS…SGSG), and 727–767 (NFGK…DEDR). The segment covering 238-252 (DNEDDDDNDEDDDDL) has biased composition (acidic residues). Composition is skewed to polar residues over residues 263–272 (DNGSGTQSSW), 343–361 (RNSSMEYQSSPREMSVNPT), and 488–497 (CSPQDNSSEA). Residues 518–531 (GSNGSSNNNDMGSS) show a composition bias toward low complexity. Polar residues predominate over residues 532-543 (TKNAITKPSSNR). The span at 689–700 (GAGGGNGSGSGS) shows a compositional bias: gly residues. Residues 712 to 754 (REAALNKFRQKRKVRNFGKKVRYQSRKRLAEQRPRIRGQFVRQ) form the CCT domain. The segment covering 727–738 (NFGKKVRYQSRK) has biased composition (basic residues).

Belongs to the ARR-like family.

It is found in the nucleus. Controls photoperiodic flowering response. Seems to be one of the component of the circadian clock. Expression of several members of the ARR-like family is controlled by circadian rhythm. The particular coordinated sequential expression of PRR73, PRR37, PRR95, PRR59 and PPR1 result to circadian waves that may be at the basis of the endogenous circadian clock. The chain is Two-component response regulator-like PRR73 (PRR73) from Oryza sativa subsp. indica (Rice).